The following is a 597-amino-acid chain: Leishmanolysin (597 aa).

Positions 1–39 (MSVDSSSTHRHRCVAARLVPLAAAGAAVTVAVGTAAAWA) are cleaved as a signal peptide. Residues 40 to 99 (HAGAVQHRCIHDAMQARVRQSVAAQRMAPSAVSAVGLPHVTLDAGNTAAGADPSTGTANV) constitute a propeptide, activation peptide. 2 disulfide bridges follow: Cys124–Cys141 and Cys190–Cys229. Position 263 (His263) interacts with Zn(2+). Residue Glu264 is part of the active site. Position 267 (His267) interacts with Zn(2+). Asn299 carries N-linked (GlcNAc...) asparagine glycosylation. 7 disulfide bridges follow: Cys313–Cys383, Cys390–Cys452, Cys403–Cys422, Cys412–Cys486, Cys463–Cys507, Cys512–Cys562, and Cys532–Cys555. A Zn(2+)-binding site is contributed by His332. Asn404 carries an N-linked (GlcNAc...) asparagine glycan. A lipid anchor (GPI-anchor amidated asparagine) is attached at Asn574. Positions 575–597 (AAGRRGPRAATALVVAALLAVAL) are cleaved as a propeptide — removed in mature form.

The protein belongs to the peptidase M8 family. It depends on Zn(2+) as a cofactor.

The protein localises to the cell membrane. The enzyme catalyses Preference for hydrophobic residues at P1 and P1' and basic residues at P2' and P3'. A model nonapeptide is cleaved at -Ala-Tyr-|-Leu-Lys-Lys-.. Has an integral role during the infection of macrophages in the mammalian host. The chain is Leishmanolysin (gp63) from Leishmania amazonensis.